The chain runs to 448 residues: Tubulin beta chain (448 aa).

Positions 11, 69, 138, 142, 143, 144, 204, and 226 each coordinate GTP. E69 lines the Mg(2+) pocket. The interval 425–448 (YQDASISEGEEEYLEEEEPLEHEE) is disordered. Residues 432–448 (EGEEEYLEEEEPLEHEE) show a composition bias toward acidic residues.

Belongs to the tubulin family. Dimer of alpha and beta chains. A typical microtubule is a hollow water-filled tube with an outer diameter of 25 nm and an inner diameter of 15 nM. Alpha-beta heterodimers associate head-to-tail to form protofilaments running lengthwise along the microtubule wall with the beta-tubulin subunit facing the microtubule plus end conferring a structural polarity. Microtubules usually have 13 protofilaments but different protofilament numbers can be found in some organisms and specialized cells. The cofactor is Mg(2+).

The protein resides in the cytoplasm. Its subcellular location is the cytoskeleton. Its function is as follows. Tubulin is the major constituent of microtubules, a cylinder consisting of laterally associated linear protofilaments composed of alpha- and beta-tubulin heterodimers. Microtubules grow by the addition of GTP-tubulin dimers to the microtubule end, where a stabilizing cap forms. Below the cap, tubulin dimers are in GDP-bound state, owing to GTPase activity of alpha-tubulin. The chain is Tubulin beta chain from Aspergillus flavus.